A 433-amino-acid polypeptide reads, in one-letter code: Enolase (433 aa).

Residue Gln-167 coordinates (2R)-2-phosphoglycerate. The active-site Proton donor is the Glu-209. Mg(2+) is bound by residues Asp-246, Glu-291, and Asp-318. The (2R)-2-phosphoglycerate site is built by Lys-343, Arg-372, Ser-373, and Lys-394. Lys-343 (proton acceptor) is an active-site residue.

Belongs to the enolase family. As to quaternary structure, component of the RNA degradosome, a multiprotein complex involved in RNA processing and mRNA degradation. It depends on Mg(2+) as a cofactor.

Its subcellular location is the cytoplasm. It localises to the secreted. The protein localises to the cell surface. The enzyme catalyses (2R)-2-phosphoglycerate = phosphoenolpyruvate + H2O. Its pathway is carbohydrate degradation; glycolysis; pyruvate from D-glyceraldehyde 3-phosphate: step 4/5. Its function is as follows. Catalyzes the reversible conversion of 2-phosphoglycerate (2-PG) into phosphoenolpyruvate (PEP). It is essential for the degradation of carbohydrates via glycolysis. The chain is Enolase from Photorhabdus laumondii subsp. laumondii (strain DSM 15139 / CIP 105565 / TT01) (Photorhabdus luminescens subsp. laumondii).